The sequence spans 417 residues: Gamma-glutamyl phosphate reductase (417 aa).

Belongs to the gamma-glutamyl phosphate reductase family.

It localises to the cytoplasm. It catalyses the reaction L-glutamate 5-semialdehyde + phosphate + NADP(+) = L-glutamyl 5-phosphate + NADPH + H(+). It functions in the pathway amino-acid biosynthesis; L-proline biosynthesis; L-glutamate 5-semialdehyde from L-glutamate: step 2/2. Catalyzes the NADPH-dependent reduction of L-glutamate 5-phosphate into L-glutamate 5-semialdehyde and phosphate. The product spontaneously undergoes cyclization to form 1-pyrroline-5-carboxylate. This Proteus mirabilis (strain HI4320) protein is Gamma-glutamyl phosphate reductase.